The following is a 324-amino-acid chain: PTS system glucose-specific EIICBA component (324 aa).

Residues 1 to 63 (HLLNVKIGMT…KWDLATPGRE (63 aa)) enclose the PTS EIIC type-1 domain. 2 helical membrane-spanning segments follow: residues 5–25 (VKIGMTFSGGVIDFLLFGVLP) and 28–48 (TAWWLVIPVGLVFAVIYYFGF). The PTS EIIB type-1 domain maps to 78–159 (GDLPYEVLAA…QDIMQGKAPA (82 aa)). Cys100 serves as the catalytic Phosphocysteine intermediate; for EIIB activity. The interval 156-177 (KAPARAEEKPKTAASEAAESET) is disordered. Over residues 167 to 177 (TAASEAAESET) the composition is skewed to low complexity. Residues 194-298 (DQVFSQKMMG…SIVTPVIFTN (105 aa)) enclose the PTS EIIA type-1 domain. His246 functions as the Tele-phosphohistidine intermediate; for EIIA activity in the catalytic mechanism.

Its subcellular location is the cell membrane. The enzyme catalyses N(pros)-phospho-L-histidyl-[protein] + D-glucose(out) = D-glucose 6-phosphate(in) + L-histidyl-[protein]. In terms of biological role, the phosphoenolpyruvate-dependent sugar phosphotransferase system (sugar PTS), a major carbohydrate active transport system, catalyzes the phosphorylation of incoming sugar substrates concomitantly with their translocation across the cell membrane. This system is involved in glucose transport. This chain is PTS system glucose-specific EIICBA component (ptsG), found in Geobacillus stearothermophilus (Bacillus stearothermophilus).